Consider the following 385-residue polypeptide: WD repeat-containing protein RUP1 (385 aa).

WD repeat units lie at residues 69 to 108 (TGSD…ESRD), 119 to 160 (CTPA…PVSE), 163 to 205 (EHGG…TLEE), 210 to 250 (GGGA…DPLI), 254 to 292 (GHTK…RVVR), 298 to 337 (VNSR…PVWV), and 348 to 385 (SDRR…GKQS).

As to quaternary structure, interacts with UVR8. Interacts directly with DHU1.

The protein resides in the nucleus. It localises to the cytoplasm. The protein localises to the cytosol. In terms of biological role, functions in association with RUP2 as repressor of UV-B-induced photomorphogenesis mediated by UVR8 and HY5, likely in coordination with DHU1. Plays a crucial negative feedback regulatory role downstream of UVR8-COP1 to inhibit UVR8 function, balance UV-B-specific responses and ensure normal plant growth. Is involved in the regulation of photoperiodic flowering and vegetative development. The protein is WD repeat-containing protein RUP1 of Arabidopsis thaliana (Mouse-ear cress).